The primary structure comprises 201 residues: FMN-dependent NADH:quinone oxidoreductase (201 aa).

FMN is bound by residues S10, 16-18 (SQS), 96-99 (MYNF), and 140-143 (SRGG).

The protein belongs to the azoreductase type 1 family. Homodimer. It depends on FMN as a cofactor.

The enzyme catalyses 2 a quinone + NADH + H(+) = 2 a 1,4-benzosemiquinone + NAD(+). The catalysed reaction is N,N-dimethyl-1,4-phenylenediamine + anthranilate + 2 NAD(+) = 2-(4-dimethylaminophenyl)diazenylbenzoate + 2 NADH + 2 H(+). Quinone reductase that provides resistance to thiol-specific stress caused by electrophilic quinones. In terms of biological role, also exhibits azoreductase activity. Catalyzes the reductive cleavage of the azo bond in aromatic azo compounds to the corresponding amines. The protein is FMN-dependent NADH:quinone oxidoreductase of Salmonella arizonae (strain ATCC BAA-731 / CDC346-86 / RSK2980).